The sequence spans 254 residues: Pimeloyl-[acyl-carrier protein] methyl ester esterase (254 aa).

Residues Trp20, 80–81 (SL), and 141–145 (FLALQ) contribute to the substrate site. Ser80 functions as the Nucleophile in the catalytic mechanism. Residues Asp205 and His233 contribute to the active site. His233 contributes to the substrate binding site.

Belongs to the AB hydrolase superfamily. Carboxylesterase BioH family. In terms of assembly, monomer.

The protein localises to the cytoplasm. It carries out the reaction 6-carboxyhexanoyl-[ACP] methyl ester + H2O = 6-carboxyhexanoyl-[ACP] + methanol + H(+). It participates in cofactor biosynthesis; biotin biosynthesis. The physiological role of BioH is to remove the methyl group introduced by BioC when the pimeloyl moiety is complete. It allows to synthesize pimeloyl-ACP via the fatty acid synthetic pathway through the hydrolysis of the ester bonds of pimeloyl-ACP esters. The chain is Pimeloyl-[acyl-carrier protein] methyl ester esterase from Methylococcus capsulatus (strain ATCC 33009 / NCIMB 11132 / Bath).